Reading from the N-terminus, the 577-residue chain is Moesin (577 aa).

Residues 2–295 (PKTISVRVTT…GNHELYMRRR (294 aa)) form the FERM domain. At Ser-74 the chain carries Phosphoserine. Lys-79 carries the post-translational modification N6-acetyllysine. Residue Lys-83 is modified to N6-succinyllysine. The [IL]-x-C-x-x-[DE] motif signature appears at 115–120 (IYCPPE). Tyr-116 is subject to Phosphotyrosine. Cys-117 is subject to S-nitrosocysteine. N6-acetyllysine is present on residues Lys-139 and Lys-165. Disordered regions lie at residues 322–342 (LLEN…KIER), 358–453 (TKKA…QMVQ), and 468–549 (STPH…AENM). The span at 358-401 (TKKAQQELEEQTRRALELEQERKRAQSEAEKLAKERQEAEEAKE) shows a compositional bias: basic and acidic residues. Ser-407 bears the Phosphoserine mark. 2 stretches are compositionally biased toward basic and acidic residues: residues 438–447 (KESEAEECHQ) and 492–519 (AELR…ERVQ). Ser-527 is subject to Phosphoserine. The segment covering 531 to 549 (NARDESKKTTNDMIHAENM) has biased composition (basic and acidic residues). Thr-558 carries the phosphothreonine; by ROCK2 and STK10 modification.

In terms of assembly, in resting T-cells, part of a PAG1-NHERF1-MSN complex which is disrupted upon TCR activation. Interacts with NHERF1. Interacts with PPP1R16B. Interacts with PDZD8. Interacts with SELPLG and SYK; these interactions mediate the activation of SYK by SELPLG. Interacts with PDPN (via cytoplasmic domain); this interaction activates RHOA and promotes epithelial-mesenchymal transition. Interacts with SPN/CD43 cytoplasmic tail. Interacts with CD44. Interacts with ICAM2. Interacts with ICAM3 (via C-terminus). Interacts with PDZD8. Interacts with F-actin. Interacts with CD46. Interacts with PTPN6. Post-translationally, phosphorylation on Thr-558 is crucial for the formation of microvilli-like structures. Phosphorylation by ROCK2 suppresses the head-to-tail association of the N-terminal and C-terminal halves resulting in an opened conformation which is capable of actin and membrane-binding. Phosphorylation on Thr-558 by STK10 negatively regulates lymphocyte migration and polarization. In terms of processing, S-nitrosylation of Cys-117 is induced by interferon-gamma and oxidatively-modified low-densitity lipoprotein (LDL(ox)) implicating the iNOS-S100A8/9 transnitrosylase complex.

The protein localises to the cell membrane. It is found in the cytoplasm. Its subcellular location is the cytoskeleton. The protein resides in the apical cell membrane. It localises to the cell projection. The protein localises to the microvillus membrane. It is found in the microvillus. With respect to regulation, a head-to-tail association, of the N-terminal and C-terminal halves results in a closed conformation (inactive form) which is incapable of actin or membrane-binding. In terms of biological role, ezrin-radixin-moesin (ERM) family protein that connects the actin cytoskeleton to the plasma membrane and thereby regulates the structure and function of specific domains of the cell cortex. Tethers actin filaments by oscillating between a resting and an activated state providing transient interactions between moesin and the actin cytoskeleton. Once phosphorylated on its C-terminal threonine, moesin is activated leading to interaction with F-actin and cytoskeletal rearrangement. These rearrangements regulate many cellular processes, including cell shape determination, membrane transport, and signal transduction. The role of moesin is particularly important in immunity acting on both T and B-cells homeostasis and self-tolerance, regulating lymphocyte egress from lymphoid organs. Modulates phagolysosomal biogenesis in macrophages. Participates also in immunologic synapse formation. This Rattus norvegicus (Rat) protein is Moesin.